We begin with the raw amino-acid sequence, 237 residues long: Orotidine 5'-phosphate decarboxylase (237 aa).

Residues D10, K33, 60–69 (DLKLHDIPNT), T123, R185, Q194, G214, and R215 each bind substrate. Catalysis depends on K62, which acts as the Proton donor.

This sequence belongs to the OMP decarboxylase family. Type 1 subfamily. In terms of assembly, homodimer.

The catalysed reaction is orotidine 5'-phosphate + H(+) = UMP + CO2. It functions in the pathway pyrimidine metabolism; UMP biosynthesis via de novo pathway; UMP from orotate: step 2/2. Its function is as follows. Catalyzes the decarboxylation of orotidine 5'-monophosphate (OMP) to uridine 5'-monophosphate (UMP). This chain is Orotidine 5'-phosphate decarboxylase, found in Enterococcus faecalis (strain ATCC 700802 / V583).